The chain runs to 78 residues: Beta-defensin 29 (78 aa).

The N-terminal stretch at 1–23 is a signal peptide; the sequence is MPVTKPYFVTVAVLLILVDKTTG. Intrachain disulfides connect Cys-40/Cys-67, Cys-47/Cys-61, and Cys-51/Cys-68.

It belongs to the beta-defensin family.

The protein localises to the secreted. In terms of biological role, has antibacterial activity. This chain is Beta-defensin 29 (Defb29), found in Rattus norvegicus (Rat).